The chain runs to 1377 residues: ATP-dependent helicase/nuclease subunit A (1377 aa).

The region spanning 4 to 478 (TSWTPGQQKV…IDLSKNFRSR (475 aa)) is the UvrD-like helicase ATP-binding domain. 25–32 (AAAGSGKT) lines the ATP pocket. The 342-residue stretch at 526-867 (FLFSDTKTEL…RIMSIHKSKG (342 aa)) folds into the UvrD-like helicase C-terminal domain. The span at 1036 to 1065 (FEEESDEQSDEERSDEERSDGEQSDGEQSD) shows a compositional bias: acidic residues. The disordered stretch occupies residues 1036–1072 (FEEESDEQSDEERSDEERSDGEQSDGEQSDGEQPRKD).

It belongs to the helicase family. AddA subfamily. Heterodimer of AddA and AddB/RexB. Mg(2+) serves as cofactor.

It carries out the reaction Couples ATP hydrolysis with the unwinding of duplex DNA by translocating in the 3'-5' direction.. It catalyses the reaction ATP + H2O = ADP + phosphate + H(+). Functionally, the heterodimer acts as both an ATP-dependent DNA helicase and an ATP-dependent, dual-direction single-stranded exonuclease. Recognizes the chi site generating a DNA molecule suitable for the initiation of homologous recombination. The AddA nuclease domain is required for chi fragment generation; this subunit has the helicase and 3' -&gt; 5' nuclease activities. This is ATP-dependent helicase/nuclease subunit A from Lachnoclostridium phytofermentans (strain ATCC 700394 / DSM 18823 / ISDg) (Clostridium phytofermentans).